We begin with the raw amino-acid sequence, 217 residues long: 3-isopropylmalate dehydratase small subunit (217 aa).

Belongs to the LeuD family. LeuD type 1 subfamily. As to quaternary structure, heterodimer of LeuC and LeuD.

The catalysed reaction is (2R,3S)-3-isopropylmalate = (2S)-2-isopropylmalate. It participates in amino-acid biosynthesis; L-leucine biosynthesis; L-leucine from 3-methyl-2-oxobutanoate: step 2/4. Functionally, catalyzes the isomerization between 2-isopropylmalate and 3-isopropylmalate, via the formation of 2-isopropylmaleate. The polypeptide is 3-isopropylmalate dehydratase small subunit (Delftia acidovorans (strain DSM 14801 / SPH-1)).